A 652-amino-acid polypeptide reads, in one-letter code: Large subunit GTPase 1 homolog (652 aa).

Ser-93 carries the post-translational modification Phosphoserine. Residues 164–438 form the CP-type G domain; it reads WRQLWRVIER…LCDCPGLVMP (275 aa). Residue 212–215 participates in GTP binding; sequence NKAD. Ser-252 is modified (phosphoserine). The tract at residues 288–347 is disordered; it reads LGEAASSEEDESEYEDCQEEEEDWQTCLEDSSSSDEEACGQDCKEGHTVDSEAQGRNTPQ. Positions 293–311 are enriched in acidic residues; the sequence is SSEEDESEYEDCQEEEEDW. GTP is bound by residues 387–394 and 431–434; these read GYPNVGKS and DCPG. A disordered region spans residues 625 to 652; the sequence is RGAGKPWKKHGNRNKKEKSRRLYKHLDM. Over residues 630–652 the composition is skewed to basic residues; it reads PWKKHGNRNKKEKSRRLYKHLDM.

Belongs to the TRAFAC class YlqF/YawG GTPase family. LSG1 subfamily.

It localises to the cytoplasm. The protein localises to the endoplasmic reticulum. It is found in the nucleus. The protein resides in the cajal body. It catalyses the reaction GTP + H2O = GDP + phosphate + H(+). Functions as a GTPase. May act by mediating the release of NMD3 from the 60S ribosomal subunit after export into the cytoplasm during the 60S ribosomal subunit maturation. The polypeptide is Large subunit GTPase 1 homolog (Bos taurus (Bovine)).